A 965-amino-acid polypeptide reads, in one-letter code: PWWP domain-containing protein 4 (965 aa).

Positions 135-196 constitute a PWWP domain; the sequence is VGDMVWGKVK…PAELIPFEPH (62 aa). Over residues 437–455 the composition is skewed to polar residues; sequence MNFTSSSGNIPGKKSSVSK. Disordered stretches follow at residues 437 to 507, 526 to 577, 649 to 708, and 905 to 927; these read MNFT…KSSL, VVKR…KSSQ, SAKT…SLAP, and LSSQDSEPKPVNNQVDHVEPPLD. Composition is skewed to basic and acidic residues over residues 456–474 and 481–495; these read LSRDDDKGLAQESDVRMGE and DQEKFEPMKSLKQDE. The span at 496 to 507 shows a compositional bias: polar residues; that stretch reads TGTNSRSNKSSL. Positions 546 to 553 match the Nuclear localization signal motif; it reads KKKEYVSE. The segment covering 549–563 has biased composition (basic and acidic residues); that stretch reads EYVSELNRDTPDKRK. The span at 657-676 shows a compositional bias: polar residues; the sequence is NEQSKAGRNRISSDSQQDVP. Over residues 691–702 the composition is skewed to basic and acidic residues; that stretch reads ASDKKTNQDATK. A compositionally biased stretch (polar residues) spans 905-919; it reads LSSQDSEPKPVNNQV.

Belongs to the PDP family. Component of the PRC2 (polycomb repressive complex 2) complex which regulates histone methylation on histone H3K27.

It is found in the nucleus. In terms of biological role, may influence gene expression by regulating the function of the PRC2 complex and modulating H3K27me3 level. The polypeptide is PWWP domain-containing protein 4 (Arabidopsis thaliana (Mouse-ear cress)).